A 264-amino-acid polypeptide reads, in one-letter code: S-adenosylmethionine decarboxylase proenzyme (264 aa).

The Schiff-base intermediate with substrate; via pyruvic acid role is filled by Ser112. A Pyruvic acid (Ser); by autocatalysis modification is found at Ser112. His117 acts as the Proton acceptor; for processing activity in catalysis. The active-site Proton donor; for catalytic activity is Cys140.

Belongs to the prokaryotic AdoMetDC family. Type 2 subfamily. Heterooctamer of four alpha and four beta chains arranged as a tetramer of alpha/beta heterodimers. Pyruvate is required as a cofactor. Is synthesized initially as an inactive proenzyme. Formation of the active enzyme involves a self-maturation process in which the active site pyruvoyl group is generated from an internal serine residue via an autocatalytic post-translational modification. Two non-identical subunits are generated from the proenzyme in this reaction, and the pyruvate is formed at the N-terminus of the alpha chain, which is derived from the carboxyl end of the proenzyme. The post-translation cleavage follows an unusual pathway, termed non-hydrolytic serinolysis, in which the side chain hydroxyl group of the serine supplies its oxygen atom to form the C-terminus of the beta chain, while the remainder of the serine residue undergoes an oxidative deamination to produce ammonia and the pyruvoyl group blocking the N-terminus of the alpha chain.

The enzyme catalyses S-adenosyl-L-methionine + H(+) = S-adenosyl 3-(methylsulfanyl)propylamine + CO2. It functions in the pathway amine and polyamine biosynthesis; S-adenosylmethioninamine biosynthesis; S-adenosylmethioninamine from S-adenosyl-L-methionine: step 1/1. In terms of biological role, catalyzes the decarboxylation of S-adenosylmethionine to S-adenosylmethioninamine (dcAdoMet), the propylamine donor required for the synthesis of the polyamines spermine and spermidine from the diamine putrescine. This chain is S-adenosylmethionine decarboxylase proenzyme, found in Yersinia pseudotuberculosis serotype O:1b (strain IP 31758).